The following is a 317-amino-acid chain: Ribose-phosphate pyrophosphokinase (317 aa).

Residues 43–45 (DGE) and 102–103 (RQ) contribute to the ATP site. 2 residues coordinate Mg(2+): H136 and D175. The active site involves K198. Residues R200, D224, and 228-232 (DTAGT) each bind D-ribose 5-phosphate.

This sequence belongs to the ribose-phosphate pyrophosphokinase family. Class I subfamily. In terms of assembly, homohexamer. Mg(2+) is required as a cofactor.

It localises to the cytoplasm. The enzyme catalyses D-ribose 5-phosphate + ATP = 5-phospho-alpha-D-ribose 1-diphosphate + AMP + H(+). It participates in metabolic intermediate biosynthesis; 5-phospho-alpha-D-ribose 1-diphosphate biosynthesis; 5-phospho-alpha-D-ribose 1-diphosphate from D-ribose 5-phosphate (route I): step 1/1. Functionally, involved in the biosynthesis of the central metabolite phospho-alpha-D-ribosyl-1-pyrophosphate (PRPP) via the transfer of pyrophosphoryl group from ATP to 1-hydroxyl of ribose-5-phosphate (Rib-5-P). The polypeptide is Ribose-phosphate pyrophosphokinase (Oceanobacillus iheyensis (strain DSM 14371 / CIP 107618 / JCM 11309 / KCTC 3954 / HTE831)).